The sequence spans 212 residues: Peroxisomal membrane protein 4 (212 aa).

Transmembrane regions (helical) follow at residues 97 to 117 (GETH…LLFG) and 153 to 173 (WDPF…LFEY). Asn-206 carries N-linked (GlcNAc...) asparagine glycosylation.

Belongs to the peroxisomal membrane protein PXMP2/4 family. As to quaternary structure, interacts with PEX19.

The protein localises to the peroxisome membrane. The protein is Peroxisomal membrane protein 4 (Pxmp4) of Mus musculus (Mouse).